The primary structure comprises 327 residues: MKPGFSPRGGGFGGRGGFGDRGGRGGGRGGRGGFGGGRGGFGGGGRGRGGGGGGFRGRGGGGGRGGGFQSGGGRGRGGGRGGKRGNQSGKNVMVEPHRHEGVFICRGKEDALVTKNLVPGESVYGEKRVSISEGDDKIEYRAWNPFRSKLAAAILGGVDQIHIKPGAKVLYLGAASGTTVSHVSDIVGPDGLVYAVEFSHRSGRDLINLAKKRTNIIPVIEDARHPHKYRMLIAMVDVIFADVAQPDQTRIVALNAHTFLRNGGHFVISIKANCIDSTASAEAVFASEVKKMQQENMKPQEQLTLEPYERDHAVVVGVYRPPPKAKN.

Positions 1–93 are disordered; sequence MKPGFSPRGG…RGNQSGKNVM (93 aa). A compositionally biased stretch (gly residues) spans 7-80; it reads PRGGGFGGRG…GGGRGRGGGR (74 aa). Asymmetric dimethylarginine occurs at positions 8, 15, 21, 24, 28, and 31. Residues lysine 90, lysine 108, and lysine 115 each participate in a glycyl lysine isopeptide (Lys-Gly) (interchain with G-Cter in SUMO2) cross-link. Position 108 is an N6-acetyllysine (lysine 108). At serine 122 the chain carries Phosphoserine. Lysine 127 is modified (N6-acetyllysine). Serine 130 and serine 132 each carry phosphoserine. Glycyl lysine isopeptide (Lys-Gly) (interchain with G-Cter in SUMO2) cross-links involve residues lysine 137, lysine 149, and lysine 164. S-adenosyl-L-methionine is bound by residues 178–179 and 197–198; these read TT and EF. N6-acetyllysine is present on residues lysine 211 and lysine 212. S-adenosyl-L-methionine contacts are provided by residues 222 to 223 and 242 to 245; these read DA and DVAQ.

The protein belongs to the methyltransferase superfamily. Fibrillarin family. Component of box C/D small nucleolar ribonucleoprotein (snoRNP) particles that contain SNU13, FBL, NOP5 and NOP56, plus a guide RNA. It is associated with the U3, U8, U13, X and Y small nuclear RNAs. Component of several ribosomal and nucleolar protein complexes. Part of the small subunit (SSU) processome, composed of more than 70 proteins and the RNA chaperone small nucleolar RNA (snoRNA) U3. Interacts with PRMT5 and UTP20. Interacts with DDX5 and C1QBP. Interacts with NOL11. Interacts with PIH1D1. Interacts with RRP1B. Interacts with NOLC1. Interacts with SDE2. Interacts with NOP2 and NOP56. Ubiquitinated. Ubiquitination leads to proteasomal degradation. Deubiquitinated by USP36. In terms of processing, by homology to other fibrillarins, some or all of the N-terminal domain arginines are modified to asymmetric dimethylarginine (DMA). Post-translationally, acetylated by CREBBP/CBP, preventing methylation of 'Gln-105' of histone H2A (H2AQ104me), without affecting rRNA methylation. Deacetylation by SIRT7 restores methylation of 'Gln-105' of histone H2A (H2AQ104me).

The protein localises to the nucleus. Its subcellular location is the nucleolus. It localises to the nucleoplasm. The catalysed reaction is L-glutaminyl-[histone H2A] + S-adenosyl-L-methionine = N(5)-methyl-L-glutaminyl-[histone H2A] + S-adenosyl-L-homocysteine + H(+). It carries out the reaction a ribonucleotide in rRNA + S-adenosyl-L-methionine = a 2'-O-methylribonucleotide in rRNA + S-adenosyl-L-homocysteine + H(+). The enzyme catalyses a ribonucleotide in U6 snRNA + S-adenosyl-L-methionine = a 2'-O-methylribonucleotide in U6 snRNA + S-adenosyl-L-homocysteine + H(+). Its function is as follows. S-adenosyl-L-methionine-dependent methyltransferase that has the ability to methylate both RNAs and proteins. Involved in pre-rRNA processing by catalyzing the site-specific 2'-hydroxyl methylation of ribose moieties in pre-ribosomal RNA. Site specificity is provided by a guide RNA that base pairs with the substrate. Methylation occurs at a characteristic distance from the sequence involved in base pairing with the guide RNA. Probably catalyzes 2'-O-methylation of U6 snRNAs in box C/D RNP complexes. U6 snRNA 2'-O-methylation is required for mRNA splicing fidelity. Also acts as a protein methyltransferase by mediating methylation of 'Gln-105' of histone H2A (H2AQ104me), a modification that impairs binding of the FACT complex and is specifically present at 35S ribosomal DNA locus. Part of the small subunit (SSU) processome, first precursor of the small eukaryotic ribosomal subunit. During the assembly of the SSU processome in the nucleolus, many ribosome biogenesis factors, an RNA chaperone and ribosomal proteins associate with the nascent pre-rRNA and work in concert to generate RNA folding, modifications, rearrangements and cleavage as well as targeted degradation of pre-ribosomal RNA by the RNA exosome. In Rattus norvegicus (Rat), this protein is rRNA 2'-O-methyltransferase fibrillarin (Fbl).